The sequence spans 927 residues: DNA mismatch repair protein MutS (927 aa).

The disordered stretch occupies residues 44-80 (DESLKRPRNRHKPTSVPSIPLDSESQEQLETADNDND). Residues 67–79 (ESQEQLETADNDN) show a composition bias toward acidic residues. 725 to 732 (GPNASGKS) lines the ATP pocket.

Belongs to the DNA mismatch repair MutS family.

This protein is involved in the repair of mismatches in DNA. It is possible that it carries out the mismatch recognition step. This protein has a weak ATPase activity. The sequence is that of DNA mismatch repair protein MutS from Prochlorococcus marinus (strain MIT 9303).